The primary structure comprises 345 residues: Serine proteinase inhibitor 2 (345 aa).

The protein belongs to the serpin family. Poxviruses subfamily.

The protein localises to the host cytoplasm. Its function is as follows. Viral serpin that inhibits both cysteine and serine proteinases involved in the regulation of host inflammatory and apoptosis processes. Major anti-apoptotic protein which inhibits both intrinsic and extrinsic pathways and strongly cleaves host CASP1 and CASP8 but is a rather poor inhibitor of host CASP3. Prevents the proteolytic activity of host interleukin-1-beta converting enzyme (ICE) and ICE-like enzymes. Can also block apoptosis through host tumor necrosis factor (TNF) receptor. The inhibition of host ICE is an example of a 'cross-class' interaction, in which a serpin inhibits a non-serine proteinase. Also inhibits granzyme B. This Rabbitpox virus (strain Utrecht) (RPV) protein is Serine proteinase inhibitor 2 (OPG199).